A 243-amino-acid polypeptide reads, in one-letter code: uncharacterized protein (243 aa).

4 helical membrane-spanning segments follow: residues A38–F58, F99–Y119, F143–L163, and A204–F224.

It is found in the cell membrane. This is an uncharacterized protein from Mycoplasma pneumoniae (strain ATCC 29342 / M129 / Subtype 1) (Mycoplasmoides pneumoniae).